Reading from the N-terminus, the 142-residue chain is MRHGNGYRKLNRTASHRKAMFANMAASLIEHEQIVTTLPKAKEIRPIVEKLVTLGKRGDLHARRQAISAIRDVKLVAKLFDTLAARYATRNGGYIRIMKAGFRAGDNAPLAVVEFVERDVDAKGKADRARVEAEAAAEADAA.

It belongs to the bacterial ribosomal protein bL17 family. As to quaternary structure, part of the 50S ribosomal subunit. Contacts protein L32.

In Brucella canis (strain ATCC 23365 / NCTC 10854 / RM-666), this protein is Large ribosomal subunit protein bL17.